A 386-amino-acid polypeptide reads, in one-letter code: Patatin-2-Kuras 2 (386 aa).

The signal sequence occupies residues 1–23; that stretch reads MATTKSFLILFFMILATTSSTCA. A PNPLA domain is found at 32-229; that stretch reads LSIDGGGIKG…TVGDPALLSL (198 aa). The GXGXXG motif lies at 36–41; that stretch reads GGGIKG. The GXSXG signature appears at 75–79; the sequence is GTSTG. The active-site Nucleophile is the S77. An N-linked (GlcNAc...) asparagine glycan is attached at N115. D215 serves as the catalytic Proton acceptor. Positions 215 to 217 match the DGA/G motif; sequence DGA. Residues 321–384 adopt a coiled-coil conformation; the sequence is ENALTGTTTE…DRKKLRANKA (64 aa).

It belongs to the patatin family.

The protein localises to the vacuole. Functionally, probable lipolytic acyl hydrolase (LAH), an activity which is thought to be involved in the response of tubers to pathogens. The protein is Patatin-2-Kuras 2 (pat2-k2) of Solanum tuberosum (Potato).